The chain runs to 485 residues: Glycogen synthase (485 aa).

Lysine 15 contributes to the ADP-alpha-D-glucose binding site.

The protein belongs to the glycosyltransferase 1 family. Bacterial/plant glycogen synthase subfamily.

The enzyme catalyses [(1-&gt;4)-alpha-D-glucosyl](n) + ADP-alpha-D-glucose = [(1-&gt;4)-alpha-D-glucosyl](n+1) + ADP + H(+). The protein operates within glycan biosynthesis; glycogen biosynthesis. Synthesizes alpha-1,4-glucan chains using ADP-glucose. This chain is Glycogen synthase, found in Rhodospirillum rubrum (strain ATCC 11170 / ATH 1.1.1 / DSM 467 / LMG 4362 / NCIMB 8255 / S1).